We begin with the raw amino-acid sequence, 162 residues long: Large ribosomal subunit protein bL9 (162 aa).

The protein belongs to the bacterial ribosomal protein bL9 family.

In terms of biological role, binds to the 23S rRNA. The protein is Large ribosomal subunit protein bL9 of Chlorobaculum parvum (strain DSM 263 / NCIMB 8327) (Chlorobium vibrioforme subsp. thiosulfatophilum).